Here is a 355-residue protein sequence, read N- to C-terminus: Anthranilate phosphoribosyltransferase (355 aa).

5-phospho-alpha-D-ribose 1-diphosphate contacts are provided by residues Gly-85, 88–89 (GD), Thr-93, 95–98 (NIST), 113–121 (KHGNRAASS), and Ser-125. Residue Gly-85 participates in anthranilate binding. Ser-97 contacts Mg(2+). Asn-116 lines the anthranilate pocket. Position 171 (Arg-171) interacts with anthranilate. Asp-229 and Glu-230 together coordinate Mg(2+).

Belongs to the anthranilate phosphoribosyltransferase family. Homodimer. Requires Mg(2+) as cofactor.

It carries out the reaction N-(5-phospho-beta-D-ribosyl)anthranilate + diphosphate = 5-phospho-alpha-D-ribose 1-diphosphate + anthranilate. It functions in the pathway amino-acid biosynthesis; L-tryptophan biosynthesis; L-tryptophan from chorismate: step 2/5. Catalyzes the transfer of the phosphoribosyl group of 5-phosphorylribose-1-pyrophosphate (PRPP) to anthranilate to yield N-(5'-phosphoribosyl)-anthranilate (PRA). In Acidothermus cellulolyticus (strain ATCC 43068 / DSM 8971 / 11B), this protein is Anthranilate phosphoribosyltransferase.